We begin with the raw amino-acid sequence, 207 residues long: Probable molybdenum cofactor guanylyltransferase (207 aa).

Residues 9–11 (LAG), K21, and D97 contribute to the GTP site. Mg(2+) is bound at residue D97.

The protein belongs to the MobA family. Mg(2+) is required as a cofactor.

It localises to the cytoplasm. The enzyme catalyses Mo-molybdopterin + GTP + H(+) = Mo-molybdopterin guanine dinucleotide + diphosphate. In terms of biological role, transfers a GMP moiety from GTP to Mo-molybdopterin (Mo-MPT) cofactor (Moco or molybdenum cofactor) to form Mo-molybdopterin guanine dinucleotide (Mo-MGD) cofactor. This Trichormus variabilis (strain ATCC 29413 / PCC 7937) (Anabaena variabilis) protein is Probable molybdenum cofactor guanylyltransferase.